Consider the following 189-residue polypeptide: Interferon alpha-G (189 aa).

The N-terminal stretch at 1 to 23 (MAPAWSLLLALLLLSCNAICSLG) is a signal peptide. Intrachain disulfides connect C24-C122 and C52-C162.

This sequence belongs to the alpha/beta interferon family.

It localises to the secreted. Functionally, produced by macrophages, IFN-alpha have antiviral activities. Interferon stimulates the production of two enzymes: a protein kinase and an oligoadenylate synthetase. This is Interferon alpha-G (IFNAG) from Bos taurus (Bovine).